Consider the following 358-residue polypeptide: Aromatic amino acid aminotransferase (358 aa).

Lys-214 bears the N6-(pyridoxal phosphate)lysine mark.

Belongs to the class-II pyridoxal-phosphate-dependent aminotransferase family. As to quaternary structure, homodimer. It depends on pyridoxal 5'-phosphate as a cofactor.

The enzyme catalyses an aromatic L-alpha-amino acid + 2-oxoglutarate = an aromatic oxo-acid + L-glutamate. Functionally, aminotransferase that catalyzes the conversion of aromatic amino acids and 2-oxoglutarate into corresponding aromatic oxo acids and L-glutamate. This is Aromatic amino acid aminotransferase from Rhodococcus jostii (strain RHA1).